The chain runs to 633 residues: Phosphomethylpyrimidine synthase (633 aa).

Substrate-binding positions include Asn245, Met274, Tyr303, His339, 359–361 (SRG), 400–403 (DGLR), and Glu439. His443 provides a ligand contact to Zn(2+). Tyr466 contributes to the substrate binding site. Residue His507 coordinates Zn(2+). Positions 587, 590, and 595 each coordinate [4Fe-4S] cluster.

It belongs to the ThiC family. In terms of assembly, homodimer. The cofactor is [4Fe-4S] cluster.

It carries out the reaction 5-amino-1-(5-phospho-beta-D-ribosyl)imidazole + S-adenosyl-L-methionine = 4-amino-2-methyl-5-(phosphooxymethyl)pyrimidine + CO + 5'-deoxyadenosine + formate + L-methionine + 3 H(+). It functions in the pathway cofactor biosynthesis; thiamine diphosphate biosynthesis. Catalyzes the synthesis of the hydroxymethylpyrimidine phosphate (HMP-P) moiety of thiamine from aminoimidazole ribotide (AIR) in a radical S-adenosyl-L-methionine (SAM)-dependent reaction. The protein is Phosphomethylpyrimidine synthase of Neisseria meningitidis serogroup C / serotype 2a (strain ATCC 700532 / DSM 15464 / FAM18).